The primary structure comprises 95 residues: MAQEEKERFVIPDENGTEHLFDELFRFTVDETEKSYMVLVPVGEEEDDEEEVEVFAFRYEEQQNEDNDISFYPVETDEEWDMIEEMLNTFSEEEE.

The protein belongs to the UPF0473 family.

The sequence is that of UPF0473 protein ABC1595 from Shouchella clausii (strain KSM-K16) (Alkalihalobacillus clausii).